The sequence spans 74 residues: uncharacterized protein (74 aa).

This is an uncharacterized protein from Dictyostelium discoideum (Social amoeba).